A 163-amino-acid chain; its full sequence is Staphylokinase (163 aa).

Residues Met1 to Ala27 form the signal peptide.

It belongs to the staphylokinase family.

The protein resides in the secreted. Potent plasminogen activator that converts plasminogen into plasmin. It forms a 1:1 complex with plasmin, which in turn activates other plasminogen molecules. The sequence is that of Staphylokinase (sak) from Staphylococcus aureus (strain MW2).